We begin with the raw amino-acid sequence, 138 residues long: Phosphoribosyl-AMP cyclohydrolase (138 aa).

Residue D84 coordinates Mg(2+). Residue C85 coordinates Zn(2+). Mg(2+)-binding residues include D86 and D88. Zn(2+) is bound by residues C102 and C109.

This sequence belongs to the PRA-CH family. In terms of assembly, homodimer. It depends on Mg(2+) as a cofactor. Zn(2+) serves as cofactor.

Its subcellular location is the cytoplasm. It catalyses the reaction 1-(5-phospho-beta-D-ribosyl)-5'-AMP + H2O = 1-(5-phospho-beta-D-ribosyl)-5-[(5-phospho-beta-D-ribosylamino)methylideneamino]imidazole-4-carboxamide. The protein operates within amino-acid biosynthesis; L-histidine biosynthesis; L-histidine from 5-phospho-alpha-D-ribose 1-diphosphate: step 3/9. In terms of biological role, catalyzes the hydrolysis of the adenine ring of phosphoribosyl-AMP. In Burkholderia orbicola (strain MC0-3), this protein is Phosphoribosyl-AMP cyclohydrolase.